Reading from the N-terminus, the 62-residue chain is Large ribosomal subunit protein uL30 (62 aa).

Belongs to the universal ribosomal protein uL30 family. In terms of assembly, part of the 50S ribosomal subunit.

The sequence is that of Large ribosomal subunit protein uL30 from Roseobacter denitrificans (strain ATCC 33942 / OCh 114) (Erythrobacter sp. (strain OCh 114)).